A 253-amino-acid polypeptide reads, in one-letter code: Protein PET20, mitochondrial (253 aa).

The transit peptide at 1 to 36 directs the protein to the mitochondrion; the sequence is MLKLARPFIPPLSRNNAISSGIVLTSRRFQSSFTFL. A disordered region spans residues 44 to 93; the sequence is KNQMKSKRKKGSKKAAYHRQPPEHEHTAPLIKQNKTITKKEHSDVRGSHL. The segment covering 47 to 60 has biased composition (basic residues); it reads MKSKRKKGSKKAAY. Basic and acidic residues predominate over residues 81-90; that stretch reads TKKEHSDVRG.

It is found in the mitochondrion. Functionally, required for respiratory growth, stability of the mitochondrial genome and for proper assembly or maintenance of mitochondrial proteins. This chain is Protein PET20, mitochondrial (PET20), found in Saccharomyces cerevisiae (strain ATCC 204508 / S288c) (Baker's yeast).